A 180-amino-acid polypeptide reads, in one-letter code: ATP-dependent protease subunit HslV (180 aa).

The active site involves threonine 5. Residues glycine 161, cysteine 164, and threonine 167 each contribute to the Na(+) site.

Belongs to the peptidase T1B family. HslV subfamily. A double ring-shaped homohexamer of HslV is capped on each side by a ring-shaped HslU homohexamer. The assembly of the HslU/HslV complex is dependent on binding of ATP.

The protein localises to the cytoplasm. It carries out the reaction ATP-dependent cleavage of peptide bonds with broad specificity.. Allosterically activated by HslU binding. In terms of biological role, protease subunit of a proteasome-like degradation complex believed to be a general protein degrading machinery. The sequence is that of ATP-dependent protease subunit HslV from Campylobacter jejuni subsp. doylei (strain ATCC BAA-1458 / RM4099 / 269.97).